The chain runs to 1127 residues: Major DNA-binding protein (1127 aa).

The interval 1098–1127 (QVKLTSMDHSGKVVGGKKRKIATMFDDLDL) is required for nuclear localization.

Belongs to the herpesviridae major DNA-binding protein family. As to quaternary structure, homooligomers. Forms double-helical filaments necessary for the formation of replication compartments within the host nucleus. Interacts with the origin-binding protein. Interacts with the helicase primase complex; this interaction stimulates primer synthesis activity of the helicase-primase complex. Interacts with the DNA polymerase. Interacts with the alkaline exonuclease; this interaction increases its nuclease processivity.

It localises to the host nucleus. Its function is as follows. Plays several crucial roles in viral infection. Participates in the opening of the viral DNA origin to initiate replication by interacting with the origin-binding protein. May disrupt loops, hairpins and other secondary structures present on ssDNA to reduce and eliminate pausing of viral DNA polymerase at specific sites during elongation. Promotes viral DNA recombination by performing strand-transfer, characterized by the ability to transfer a DNA strand from a linear duplex to a complementary single-stranded DNA circle. Can also catalyze the renaturation of complementary single strands. Additionally, reorganizes the host cell nucleus, leading to the formation of prereplicative sites and replication compartments. This process is driven by the protein which can form double-helical filaments in the absence of DNA. The sequence is that of Major DNA-binding protein from Alcelaphine herpesvirus 1 (strain C500) (AlHV-1).